We begin with the raw amino-acid sequence, 182 residues long: Adenine phosphoribosyltransferase (182 aa).

The protein belongs to the purine/pyrimidine phosphoribosyltransferase family. As to quaternary structure, homodimer.

It is found in the cytoplasm. The catalysed reaction is AMP + diphosphate = 5-phospho-alpha-D-ribose 1-diphosphate + adenine. Its pathway is purine metabolism; AMP biosynthesis via salvage pathway; AMP from adenine: step 1/1. In terms of biological role, catalyzes a salvage reaction resulting in the formation of AMP, that is energically less costly than de novo synthesis. In Pseudomonas fluorescens (strain Pf0-1), this protein is Adenine phosphoribosyltransferase.